The following is a 286-amino-acid chain: 33 kDa chaperonin (286 aa).

Cystine bridges form between C225–C227 and C258–C261.

The protein belongs to the HSP33 family. In terms of processing, under oxidizing conditions two disulfide bonds are formed involving the reactive cysteines. Under reducing conditions zinc is bound to the reactive cysteines and the protein is inactive.

The protein resides in the cytoplasm. In terms of biological role, redox regulated molecular chaperone. Protects both thermally unfolding and oxidatively damaged proteins from irreversible aggregation. Plays an important role in the bacterial defense system toward oxidative stress. The chain is 33 kDa chaperonin from Shewanella sp. (strain MR-4).